The sequence spans 884 residues: Translation initiation factor IF-2 (884 aa).

Composition is skewed to basic and acidic residues over residues 110 to 153 (AKAK…KEKA) and 193 to 234 (KQKE…DHHV). The disordered stretch occupies residues 110–291 (AKAKAEADAK…NRSTAPQSMA (182 aa)). Residues 255-268 (GRRARNKPTNKKRG) show a composition bias toward basic residues. The tr-type G domain maps to 384–553 (TRAPVVTIMG…LLQSEVLELK (170 aa)). The G1 stretch occupies residues 393–400 (GHVDHGKT). 393–400 (GHVDHGKT) provides a ligand contact to GTP. Positions 418–422 (GITQH) are G2. Residues 439–442 (DTPG) form a G3 region. GTP is bound by residues 439–443 (DTPGH) and 493–496 (NKMD). Residues 493-496 (NKMD) are G4. The segment at 529–531 (SAK) is G5.

It belongs to the TRAFAC class translation factor GTPase superfamily. Classic translation factor GTPase family. IF-2 subfamily.

The protein resides in the cytoplasm. Functionally, one of the essential components for the initiation of protein synthesis. Protects formylmethionyl-tRNA from spontaneous hydrolysis and promotes its binding to the 30S ribosomal subunits. Also involved in the hydrolysis of GTP during the formation of the 70S ribosomal complex. This chain is Translation initiation factor IF-2, found in Shewanella denitrificans (strain OS217 / ATCC BAA-1090 / DSM 15013).